The chain runs to 261 residues: CD40 ligand (261 aa).

Residues 1 to 22 are Cytoplasmic-facing; that stretch reads MIETYSQPSPRSVAAGPPVSMK. Residues 23–43 traverse the membrane as a helical; Signal-anchor for type II membrane protein segment; sequence IFMYLLTVFLITQMIGSALFA. Residues 44-240 are Extracellular-facing; that stretch reads AYLHRRLDKI…LQPGASVFVN (197 aa). The THD domain occupies 122 to 261; sequence IAAHVISEAS…GFTSFGLLKL (140 aa). A disulfide bridge links C178 with C218. Residue N240 is glycosylated (N-linked (GlcNAc...) asparagine).

Belongs to the tumor necrosis factor family. Homotrimer. Interacts with CD28. CD40 ligand, soluble form: Exists as either a monomer or a homotrimer. Forms a ternary complex between CD40 and integrins for CD40-CD40LG signaling. In terms of processing, the soluble form derives from the membrane form by proteolytic processing.

It localises to the cell membrane. The protein resides in the cell surface. Its subcellular location is the secreted. Functionally, cytokine that acts as a ligand to CD40/TNFRSF5. Costimulates T-cell proliferation and cytokine production. Its cross-linking on T-cells generates a costimulatory signal which enhances the production of IL4 and IL10 in conjunction with the TCR/CD3 ligation and CD28 costimulation. Induces the activation of NF-kappa-B. Induces the activation of kinases MAPK8 and PAK2 in T-cells. Mediates B-cell proliferation in the absence of co-stimulus as well as IgE production in the presence of IL4. Involved in immunoglobulin class switching. Its function is as follows. Acts as a ligand for integrins, specifically ITGA5:ITGB1 and ITGAV:ITGB3; both integrins and the CD40 receptor are required for activation of CD40-CD40LG signaling, which have cell-type dependent effects, such as B-cell activation, NF-kappa-B signaling and anti-apoptotic signaling. This chain is CD40 ligand (CD40LG), found in Sus scrofa (Pig).